The sequence spans 389 residues: Rhizopuspepsin-1 (389 aa).

The signal sequence occupies residues 1–21 (MKFTLISSCVALAAMTLAVEA). Residues 22–66 (APNGKKINIPLAKNNSYKPSAKNALNKALAKYNRRKVGSGGITTE) constitute a propeptide, activation peptide. The Peptidase A1 domain maps to 82-385 (YYGEVTVGTP…NQEVPEVQIA (304 aa)). Asp-100 is a catalytic residue. A disulfide bridge connects residues Cys-113 and Cys-116. Asp-283 is a catalytic residue. A disulfide bridge connects residues Cys-317 and Cys-350.

This sequence belongs to the peptidase A1 family.

The catalysed reaction is Hydrolysis of proteins with broad specificity similar to that of pepsin A, preferring hydrophobic residues at P1 and P1'. Clots milk and activates trypsinogen. Does not cleave 4-Gln-|-His-5, but does cleave 10-His-|-Leu-11 and 12-Val-|-Glu-13 in B chain of insulin.. The protein is Rhizopuspepsin-1 (RNAP) of Rhizopus niveus.